A 227-amino-acid polypeptide reads, in one-letter code: MSESDTDPDIDDDAHNNGDNDVDVAVDESESAETTTDTDTASANAKLFGEWDVSEIEYEDPSTQRYITVTPIAHTMGRHAAKQFEKSKISVVERLINRLMQTEDNTGHKQKTMNIVEDAFDTIHNRTEENPVQVLVRGVENAAPREETVRLKYGGISVPQAVDVAPQRRVDQALKFIADGTQRGSYKSAQSAADSLAQVIIGAANYDVQSYAVGQKEESERVAEAAR.

Composition is skewed to acidic residues over residues 1-12 (MSESDTDPDIDD) and 20-31 (NDVDVAVDESES). The disordered stretch occupies residues 1–43 (MSESDTDPDIDDDAHNNGDNDVDVAVDESESAETTTDTDTASA). Low complexity predominate over residues 32 to 43 (AETTTDTDTASA).

The protein belongs to the universal ribosomal protein uS7 family. As to quaternary structure, part of the 30S ribosomal subunit.

One of the primary rRNA binding proteins, it binds directly to 16S rRNA where it nucleates assembly of the head domain of the 30S subunit. Is located at the subunit interface close to the decoding center. The protein is Small ribosomal subunit protein uS7 of Haloquadratum walsbyi (strain DSM 16790 / HBSQ001).